The primary structure comprises 456 residues: Anthocyanidin 3-O-glucosyltransferase UFGT (456 aa).

S18 lines the kaempferol pocket. Residue S18 coordinates quercetin. T19 lines the UDP pocket. A UDP-alpha-D-glucose-binding site is contributed by T19. Positions 20 and 84 each coordinate kaempferol. H20 acts as the Proton acceptor in catalysis. Residue Q84 coordinates quercetin. The active-site Charge relay is the D119. A UDP-alpha-D-glucose-binding site is contributed by T141. H150 and Q188 together coordinate kaempferol. Positions 150 and 188 each coordinate quercetin. Residues T280, S306, W332, A333, and H350 each contribute to the UDP site. The UDP-alpha-D-glucose site is built by T280, S306, W332, A333, H350, W353, N354, S355, and E358. Residues N354, S355, and E358 each coordinate UDP. G373 is a binding site for quercetin. Residues D374 and Q375 each contribute to the UDP-alpha-D-glucose site.

Belongs to the UDP-glycosyltransferase family. As to expression, detected only in berry skin.

The catalysed reaction is an anthocyanidin + UDP-alpha-D-glucose + H(+) = an anthocyanidin 3-O-beta-D-glucoside + UDP. It catalyses the reaction cyanidin + UDP-alpha-D-glucose = cyanidin 3-O-beta-D-glucoside + UDP + H(+). The enzyme catalyses delphinidin + UDP-alpha-D-glucose = delphinidin 3-O-beta-D-glucoside + UDP. It carries out the reaction peonidin + UDP-alpha-D-glucose = peonidin 3-O-beta-D-glucoside + UDP. The catalysed reaction is pelargonidin + UDP-alpha-D-glucose = pelargonidin 3-O-beta-D-glucoside + UDP. It catalyses the reaction malvidin + UDP-alpha-D-glucose = malvidin 3-O-beta-D-glucoside + UDP. The enzyme catalyses a flavonol + UDP-alpha-D-glucose = a flavonol 3-O-beta-D-glucoside + UDP + H(+). It participates in pigment biosynthesis; anthocyanin biosynthesis. Its activity is regulated as follows. Inhibited by Mn(2+) and Zn(2+). In terms of biological role, in the presence of other necessary color factors, this glycosylation reaction allows the accumulation of anthocyanin pigments. Involved in the formation of red wine pigments. UDP-glucose (UDP-Glc) is the physiological sugar donor, and cyanidin is the natural acceptor in vivo. Can glucosylate the anthocyanidins delphinidin, peonidin, pelargonidin and malvidin. The flavonols quercitin and kaempferol can also be glucosylated in vitro, but with glucosylation rates 50-100 times lower than cyanidin. In vitro, can use UDP-Glc, UDP-5SGlc, UDP-Xyl, UDP-Man, UDP-Gal, UDP-GlcNAc, GDP-Glc, dTDP-Glc and dTDP-Xyl as sugar donors, but not UDP-6OMeGal, UDP-Ara, UDP-6FGal, UDP-GlcN, UDP-2FGal, UDP-5SAra, GDP-Man, GDP-Fuc, UDP-Fuc or UDP-Rha. The polypeptide is Anthocyanidin 3-O-glucosyltransferase UFGT (Vitis vinifera (Grape)).